The primary structure comprises 335 residues: Ubiquinone biosynthesis protein COQ4, mitochondrial (335 aa).

A mitochondrion-targeting transit peptide spans 1 to 10; the sequence is MLRLSLLRST. Residues His210, Asp211, His214, and Glu226 each coordinate Zn(2+).

The protein belongs to the COQ4 family. In terms of assembly, component of a multi-subunit COQ enzyme complex, composed of at least COQ3, COQ4, COQ5, COQ6, COQ7 and COQ9. Interacts with COQ3. It depends on Zn(2+) as a cofactor.

It localises to the mitochondrion inner membrane. The catalysed reaction is 4-hydroxy-3-methoxy-5-(all-trans-hexaprenyl)benzoate + H(+) = 2-methoxy-6-(all-trans-hexaprenyl)phenol + CO2. Its pathway is cofactor biosynthesis; ubiquinone biosynthesis. Its function is as follows. Lyase that catalyzes the C1-decarboxylation of 4-hydroxy-3-methoxy-5-(all-trans-hexaprenyl)benzoic acid into 2-methoxy-6-(all-trans-hexaprenyl)phenol during ubiquinone biosynthesis. The chain is Ubiquinone biosynthesis protein COQ4, mitochondrial from Saccharomyces cerevisiae (strain YJM789) (Baker's yeast).